Consider the following 20-residue polypeptide: Peptide encoded by miPEP171b (20 aa).

In terms of tissue distribution, lateral root initiations.

Functionally, regulatory peptide encoded by the primary transcript (pri-miR171b) of the microRNA miR171b that enhances the accumulation of its corresponding mature miRNA. Acts probably as a transcriptional activator of its corresponding pri-miRNA. Has no effect on the accumulation of other miRNAs. Addition of synthetic miPEP171b increases the abundance of miR171b, with consequent reduction of lateral root formation. In Medicago truncatula (Barrel medic), this protein is Peptide encoded by miPEP171b.